A 794-amino-acid chain; its full sequence is Potassium transporter 2 (794 aa).

Residues 1-21 (MDLNLGKCCGSRSSKKESWRS) are Cytoplasmic-facing. A helical membrane pass occupies residues 22–42 (VLLLAYQSLGVVYGDLSISPL). Residues 43 to 64 (YVFKSTFAEDIQHSETNEEIYG) are Extracellular-facing. Residues 65–85 (VMSFVFWTLTLVPLLKYVFIV) traverse the membrane as a helical segment. At 86-153 (LRADDNGEGG…EKHKWLHTAL (68 aa)) the chain is on the cytoplasmic side. Residues 154-174 (LLLVLLGTCMVIGDGLLTPAI) traverse the membrane as a helical segment. The Extracellular segment spans residues 175-193 (SVFSAVSGLELNMSKEHHQ). The helical transmembrane segment at 194–214 (YAVIPITCFILVCLFSLQHFG) threads the bilayer. The Cytoplasmic portion of the chain corresponds to 215–217 (THR). Residues 218–238 (VGFVFAPIVLTWLLCISGIGL) traverse the membrane as a helical segment. Residues 239 to 265 (YNIIQWNPHIYKALSPTYMFMFLRKTR) are Extracellular-facing. A helical membrane pass occupies residues 266–286 (VSGWMSLGGILLCITGAEAMF). Residues 287–294 (ADLGHFNY) are Cytoplasmic-facing. The helical transmembrane segment at 295-315 (AAIQIAFTFLVYPALILAYMG) threads the bilayer. Residues 316-339 (QAAYLSRHHHSAHAIGFYVSVPKC) lie on the Extracellular side of the membrane. Residues 340–360 (LHWPVLAVAILASVVGSQAII) form a helical membrane-spanning segment. Over 361–391 (SGTFSIINQSQSLGCFPRVKVIHTSDKMHGQ) the chain is Cytoplasmic. Residues 392-412 (IYIPEINWMLMILCIAVTIGF) form a helical membrane-spanning segment. Residues 413-417 (RDVKH) are Extracellular-facing. A run of 2 helical transmembrane segments spans residues 418–438 (LGNA…CLTS) and 439–459 (LVIV…LLFF). At 460-476 (GSIELLYFSASLTKFRE) the chain is on the extracellular side. A helical transmembrane segment spans residues 477-497 (GAWLPILLSLIFMIIMFVWHY). Residues 498–794 (TTIKKYEFDL…LLEVGMVYVV (297 aa)) are Cytoplasmic-facing.

The protein belongs to the HAK/KUP transporter (TC 2.A.72.3) family. Slightly detected in roots, stems, leaves and flowers of mature plants and in potassium-starved plants.

The protein resides in the cell membrane. Functionally, low-affinity potassium transporter. Could mediate the potassium-dependent cell expansion in growing tissues. This Arabidopsis thaliana (Mouse-ear cress) protein is Potassium transporter 2 (POT2).